Consider the following 813-residue polypeptide: Lon protease (813 aa).

One can recognise a Lon N-terminal domain in the interval 14–207 (LPLLPLRGII…ILTEILAREM (194 aa)). Position 359–366 (359–366 (GPPGVGKT)) interacts with ATP. The 182-residue stretch at 595-776 (ESQVGVATGL…DQVIREALLE (182 aa)) folds into the Lon proteolytic domain. Residues Ser682 and Lys725 contribute to the active site.

Belongs to the peptidase S16 family. As to quaternary structure, homohexamer. Organized in a ring with a central cavity.

Its subcellular location is the cytoplasm. The catalysed reaction is Hydrolysis of proteins in presence of ATP.. ATP-dependent serine protease that mediates the selective degradation of mutant and abnormal proteins as well as certain short-lived regulatory proteins. Required for cellular homeostasis and for survival from DNA damage and developmental changes induced by stress. Degrades polypeptides processively to yield small peptide fragments that are 5 to 10 amino acids long. Binds to DNA in a double-stranded, site-specific manner. This Heliobacterium modesticaldum (strain ATCC 51547 / Ice1) protein is Lon protease.